The following is a 579-amino-acid chain: MYVTFNEALDSSFGNLESPNHDFKVGDPNMVPTPPMDSDSAAISLAFLISLSITFAILMLILVVIAAYVTFCGDDESEYDEENALGTRTSGTLHSLFGKKHSGILLDSSFASPGGFDDEIVLQERELEELPKMSAYEVELYIRAKEFQMMSPPMVKDFGTYLDSDDQQFIKDRGIQSYFLLPSINDNIDEYGNFLPSFIVQDKLDIQFSKFNKSSSTVMNYPLPHNRKDAVYFEVKIFRHIQKSNSIFSIGLTTVPYPYFRVPGMAKYSIAYESTGKLRINNPFTASTLLPKLEEGDTVGFGYRYKTGTIFITHNGKKLMDVTQNIGIDLFIGIGAFNAAYTRTYTRDGLLEDPDNVSFREALSEGKDIEVAKDLQRVHDPHDDSDEMTSDEVELHVNLGQVGFVFIEANVKKYAFGSVYGQIGIPPAYNGTEIKKDTILQKGEELPPRYADTDNFFGSMKVKEGSSSRITAQTSKPLWSVGTYERISSNFDRENNVYHDSLETDDNNTDNNVNNNDENAGCNENSPLLEDDGNKRPENSNTPREVSDGAINKNPRNKSTKKRQRNRGKSSKKKNRSRK.

Topologically, residues 1–44 (MYVTFNEALDSSFGNLESPNHDFKVGDPNMVPTPPMDSDSAAIS) are cytoplasmic. Residues 45–65 (LAFLISLSITFAILMLILVVI) form a helical; Signal-anchor for type II membrane protein membrane-spanning segment. Topologically, residues 66–579 (AAYVTFCGDD…SSKKKNRSRK (514 aa)) are lumenal. In terms of domain architecture, B30.2/SPRY spans 166–364 (DQQFIKDRGI…DNVSFREALS (199 aa)). 2 N-linked (GlcNAc...) asparagine glycosylation sites follow: asparagine 212 and asparagine 356. Serine 358 is modified (phosphoserine). A Glycyl lysine isopeptide (Lys-Gly) (interchain with G-Cter in ubiquitin) cross-link involves residue lysine 367. Asparagine 430 and asparagine 507 each carry an N-linked (GlcNAc...) asparagine glycan. The segment at 499–579 (HDSLETDDNN…SSKKKNRSRK (81 aa)) is disordered. A compositionally biased stretch (low complexity) spans 509-525 (TDNNVNNNDENAGCNEN). Positions 555-579 (PRNKSTKKRQRNRGKSSKKKNRSRK) are enriched in basic residues. Asparagine 557 and asparagine 575 each carry an N-linked (GlcNAc...) asparagine glycan.

It belongs to the SSH4 family.

It localises to the vacuole membrane. Its subcellular location is the endosome membrane. In terms of biological role, components of the endosome-vacuole trafficking pathway that regulates nutrient transport. May be involved in processes which determine whether plasma membrane proteins are degraded or routed to the plasma membrane. Confers leflunomide resistance when overexpressed. The sequence is that of Protein SSH4 (SSH4) from Saccharomyces cerevisiae (strain YJM789) (Baker's yeast).